A 214-amino-acid polypeptide reads, in one-letter code: Imidazole glycerol phosphate synthase subunit HisH 2 (214 aa).

Positions 2 to 210 (KIVIIDYDMG…LDWVKIQKLG (209 aa)) constitute a Glutamine amidotransferase type-1 domain. The Nucleophile role is filled by C82. Active-site residues include H185 and E187.

In terms of assembly, heterodimer of HisH and HisF.

Its subcellular location is the cytoplasm. The enzyme catalyses 5-[(5-phospho-1-deoxy-D-ribulos-1-ylimino)methylamino]-1-(5-phospho-beta-D-ribosyl)imidazole-4-carboxamide + L-glutamine = D-erythro-1-(imidazol-4-yl)glycerol 3-phosphate + 5-amino-1-(5-phospho-beta-D-ribosyl)imidazole-4-carboxamide + L-glutamate + H(+). The catalysed reaction is L-glutamine + H2O = L-glutamate + NH4(+). It participates in amino-acid biosynthesis; L-histidine biosynthesis; L-histidine from 5-phospho-alpha-D-ribose 1-diphosphate: step 5/9. IGPS catalyzes the conversion of PRFAR and glutamine to IGP, AICAR and glutamate. The HisH subunit provides the glutamine amidotransferase activity that produces the ammonia necessary to HisF for the synthesis of IGP and AICAR. This is Imidazole glycerol phosphate synthase subunit HisH 2 (hisH2) from Vibrio vulnificus (strain YJ016).